Reading from the N-terminus, the 81-residue chain is Three-finger toxin MALT0051C (81 aa).

Residues 1–21 (MKTLLLTLVVVTVVCLDFGHT) form the signal peptide. 4 disulfides stabilise this stretch: cysteine 24–cysteine 43, cysteine 38–cysteine 60, cysteine 62–cysteine 73, and cysteine 74–cysteine 79.

The protein belongs to the three-finger toxin family. Short-chain subfamily. Type I alpha-neurotoxin sub-subfamily. Expressed by the venom gland.

It localises to the secreted. In terms of biological role, binds to muscle nicotinic acetylcholine receptor (nAChR) and inhibit acetylcholine from binding to the receptor, thereby impairing neuromuscular transmission. The protein is Three-finger toxin MALT0051C of Micrurus altirostris (Uruguayan coral snake).